The chain runs to 876 residues: Leucine--tRNA ligase (876 aa).

The short motif at 42 to 52 (PYPSGKLHMGH) is the 'HIGH' region element. The short motif at 634–638 (KMSKS) is the 'KMSKS' region element. Lysine 637 serves as a coordination point for ATP.

Belongs to the class-I aminoacyl-tRNA synthetase family.

It is found in the cytoplasm. It catalyses the reaction tRNA(Leu) + L-leucine + ATP = L-leucyl-tRNA(Leu) + AMP + diphosphate. The polypeptide is Leucine--tRNA ligase (Neisseria gonorrhoeae (strain ATCC 700825 / FA 1090)).